Here is a 373-residue protein sequence, read N- to C-terminus: Methylmalonyl-CoA decarboxylase subunit beta (373 aa).

10 consecutive transmembrane segments (helical) span residues 17–37 (FLAFTTGNAIMILVGLILLYL), 38–58 (AFAREFEPLLLGPIAFGCLLA), 81–101 (IFPPLIFLGVGAMTDFGPLIA), 106–126 (LLLGAAAQIGVFAALGGAMML), 132–152 (EAAAIGIIGGADGPTSIYLAT), 156–176 (PHLLGAIAVAAYSYMSLVPLI), 206–226 (IVFPIVATIFISLLLPSITSL), 257–277 (VTIFLATGTGLTMSAEHFLSL), 280–300 (IKIILLGLFAFICGTAGGVLF), and 343–363 (FLLMHAMGPNVAGVIGTAVAA).

This sequence belongs to the GcdB/MmdB/OadB family. The methylmalonyl-CoA decarboxylase is composed of five subunits: the carboxyltransferase alpha subunit (MmdA), the tunnel beta subunit (MmdB), the biotin-containing gamma subunit (MmdC), and the delta (MmdD) and epsilon (MmdE) subunits. The N-terminus is blocked.

It is found in the cell membrane. It catalyses the reaction (S)-methylmalonyl-CoA + Na(+)(in) + H(+)(out) = propanoyl-CoA + Na(+)(out) + CO2. Completely inhibited by avidin. Its function is as follows. Tunnel subunit of the sodium ion pump methylmalonyl-CoA decarboxylase, which converts the chemical energy of a decarboxylation reaction into an electrochemical gradient of Na(+) ions across the cytoplasmic membrane, thereby creating a sodium ion motive force that is used for ATP synthesis. The beta subunit catalyzes the decarboxylation of the carboxybiotin carrier protein and the coupled export of Na(+) ions. Can also convert malonyl-CoA into acetyl-CoA. The protein is Methylmalonyl-CoA decarboxylase subunit beta of Veillonella parvula (Staphylococcus parvulus).